An 80-amino-acid polypeptide reads, in one-letter code: MKSDIHPAYEETTVVCGCGNTFQTRSTKPGGRIVVEVCSQCHPFYTGKQKILDSGGRVARFEKRYGKRKVGADKAVSTGK.

Residues Cys16, Cys18, Cys38, and Cys41 each contribute to the Zn(2+) site.

Belongs to the bacterial ribosomal protein bL31 family. Type A subfamily. As to quaternary structure, part of the 50S ribosomal subunit. It depends on Zn(2+) as a cofactor.

Binds the 23S rRNA. The protein is Large ribosomal subunit protein bL31 of Mycobacterium bovis (strain ATCC BAA-935 / AF2122/97).